Here is a 207-residue protein sequence, read N- to C-terminus: Small ribosomal subunit protein uS4 (207 aa).

The segment at 26-47 is disordered; the sequence is AINNKNYKPGQQGNSSSISKPS. The segment covering 28–39 has biased composition (polar residues); it reads NNKNYKPGQQGN. One can recognise an S4 RNA-binding domain in the interval 95–158; that stretch reads RRLDAVVYRL…KQIPIVIGAI (64 aa).

The protein belongs to the universal ribosomal protein uS4 family. Part of the 30S ribosomal subunit. Contacts protein S5. The interaction surface between S4 and S5 is involved in control of translational fidelity.

Its function is as follows. One of the primary rRNA binding proteins, it binds directly to 16S rRNA where it nucleates assembly of the body of the 30S subunit. In terms of biological role, with S5 and S12 plays an important role in translational accuracy. The sequence is that of Small ribosomal subunit protein uS4 from Orientia tsutsugamushi (strain Boryong) (Rickettsia tsutsugamushi).